The sequence spans 104 residues: Large ribosomal subunit protein eL30 (104 aa).

Belongs to the eukaryotic ribosomal protein eL30 family.

The chain is Large ribosomal subunit protein eL30 (rpl30e) from Sulfolobus acidocaldarius (strain ATCC 33909 / DSM 639 / JCM 8929 / NBRC 15157 / NCIMB 11770).